Consider the following 95-residue polypeptide: MSRSSKKGPYVDIKLLDKIEAMNKANEKRVIRTWSRDSTIFPQMIGHTIAVHDGRRHVPVYITENMVGHKLGEFAPTRFFRGHGGKKADKRGKVK.

The protein belongs to the universal ribosomal protein uS19 family.

In terms of biological role, protein S19 forms a complex with S13 that binds strongly to the 16S ribosomal RNA. This chain is Small ribosomal subunit protein uS19, found in Chloroflexus aurantiacus (strain ATCC 29366 / DSM 635 / J-10-fl).